We begin with the raw amino-acid sequence, 525 residues long: Keratin, type II cytoskeletal 4 (525 aa).

A head region spans residues 1–145; sequence MIARQSSVRG…DPEIQKIRTA (145 aa). Omega-N-methylarginine is present on R13. A coil 1A region spans residues 146–181; the sequence is EREQIKTLNNKFASFIDKVRFLEQQNKVLETKWNLL. Residues 146 to 459 form the IF rod domain; it reads EREQIKTLNN…KLLEGEECRM (314 aa). The interval 182–200 is linker 1; sequence QQQTTTTSPKSLDPFFETY. The segment at 201 to 292 is coil 1B; that stretch reads INALRKNLDT…VLYEAELAQM (92 aa). The linker 12 stretch occupies residues 293–316; the sequence is QTHVSDTSVVLSMDNNRNLDLDGI. The interval 317–455 is coil 2; that stretch reads IAEVRAQYED…ATYRKLLEGE (139 aa). The tail stretch occupies residues 456–524; the sequence is ECRMSGECKS…SSATITKRSP (69 aa).

This sequence belongs to the intermediate filament family. As to quaternary structure, heterotetramer of two type I and two type II keratins. Keratin-4 is generally associated with keratin-13. Expressed in the dorsal and ventral epithelium of the tongue. Highest expression levels are detected in the suprabasal layer with low levels detected in the basal cell layer. Within the suprabasal layer expression is highest in the spinous cells, decreases in the granular cells and is not detected in the stratum corneum.

The chain is Keratin, type II cytoskeletal 4 (Krt4) from Mus musculus (Mouse).